A 66-amino-acid chain; its full sequence is Large ribosomal subunit protein uL29 (66 aa).

This sequence belongs to the universal ribosomal protein uL29 family.

The protein is Large ribosomal subunit protein uL29 of Allorhizobium ampelinum (strain ATCC BAA-846 / DSM 112012 / S4) (Agrobacterium vitis (strain S4)).